Here is a 369-residue protein sequence, read N- to C-terminus: Aminomethyltransferase (369 aa).

The protein belongs to the GcvT family. In terms of assembly, the glycine cleavage system is composed of four proteins: P, T, L and H.

The enzyme catalyses N(6)-[(R)-S(8)-aminomethyldihydrolipoyl]-L-lysyl-[protein] + (6S)-5,6,7,8-tetrahydrofolate = N(6)-[(R)-dihydrolipoyl]-L-lysyl-[protein] + (6R)-5,10-methylene-5,6,7,8-tetrahydrofolate + NH4(+). Its function is as follows. The glycine cleavage system catalyzes the degradation of glycine. This is Aminomethyltransferase from Xanthomonas euvesicatoria pv. vesicatoria (strain 85-10) (Xanthomonas campestris pv. vesicatoria).